The sequence spans 298 residues: 4-hydroxy-tetrahydrodipicolinate synthase (298 aa).

Pyruvate is bound at residue threonine 48. Tyrosine 137 serves as the catalytic Proton donor/acceptor. Lysine 166 serves as the catalytic Schiff-base intermediate with substrate. Isoleucine 207 lines the pyruvate pocket.

The protein belongs to the DapA family. As to quaternary structure, homotetramer; dimer of dimers.

The protein resides in the cytoplasm. It carries out the reaction L-aspartate 4-semialdehyde + pyruvate = (2S,4S)-4-hydroxy-2,3,4,5-tetrahydrodipicolinate + H2O + H(+). It participates in amino-acid biosynthesis; L-lysine biosynthesis via DAP pathway; (S)-tetrahydrodipicolinate from L-aspartate: step 3/4. Catalyzes the condensation of (S)-aspartate-beta-semialdehyde [(S)-ASA] and pyruvate to 4-hydroxy-tetrahydrodipicolinate (HTPA). In Campylobacter jejuni subsp. jejuni serotype O:2 (strain ATCC 700819 / NCTC 11168), this protein is 4-hydroxy-tetrahydrodipicolinate synthase.